Here is a 461-residue protein sequence, read N- to C-terminus: Cysteine--tRNA ligase (461 aa).

Cys-28 provides a ligand contact to Zn(2+). Positions 30-40 (ITVYDLCHIGH) match the 'HIGH' region motif. Residues Cys-209, His-234, and Glu-238 each contribute to the Zn(2+) site. The short motif at 266–270 (KMSKS) is the 'KMSKS' region element. Lys-269 contributes to the ATP binding site.

The protein belongs to the class-I aminoacyl-tRNA synthetase family. In terms of assembly, monomer. Zn(2+) is required as a cofactor.

It localises to the cytoplasm. It catalyses the reaction tRNA(Cys) + L-cysteine + ATP = L-cysteinyl-tRNA(Cys) + AMP + diphosphate. The protein is Cysteine--tRNA ligase of Escherichia coli O17:K52:H18 (strain UMN026 / ExPEC).